Reading from the N-terminus, the 68-residue chain is UPF0434 protein H16_A0605 (68 aa).

This sequence belongs to the UPF0434 family.

The polypeptide is UPF0434 protein H16_A0605 (Cupriavidus necator (strain ATCC 17699 / DSM 428 / KCTC 22496 / NCIMB 10442 / H16 / Stanier 337) (Ralstonia eutropha)).